Consider the following 250-residue polypeptide: Kv channel-interacting protein 4 (250 aa).

Residues 2-44 are KIS; sequence NVRRVESISAQLEEASSTGGFLYAQNSTKRSIKERLMKLLPCS. Phosphoserine occurs at positions 17 and 56. Residues 61–117 form the EF-hand 1; degenerate domain; it reads LEMATVRHRPEALELLEAQSKFTKKELQILYRGFKNECPSGVVNEETFKEIYSQFFP. 3 EF-hand domains span residues 120–155, 156–191, and 204–239; these read DSTT…LLRG, TVQE…IYDM, and APRQ…DENI. Residues Asp-133, Asp-135, Asn-137, Asp-144, Asp-169, Asn-171, Asp-173, Tyr-175, Glu-180, Asp-217, Asn-219, Asp-221, and Glu-228 each coordinate Ca(2+). The interaction with KCND2 stretch occupies residues 237-250; the sequence is ENIMRSMQLFENVI.

The protein belongs to the recoverin family. In terms of assembly, component of heteromultimeric potassium channels. Identified in potassium channel complexes containing KCND1, KCND2, KCND3, KCNIP1, KCNIP2, KCNIP3, KCNIP4, DPP6 and DPP10. Interacts with KCND2. Interacts with KCND3. Interacts with the C-terminus of PSEN2 and probably PSEN1.

The protein localises to the cell membrane. The protein resides in the cytoplasm. It is found in the peroxisome. In terms of biological role, regulatory subunit of Kv4/D (Shal)-type voltage-gated rapidly inactivating A-type potassium channels. Modulates KCND2 channel density, inactivation kinetics and rate of recovery from inactivation in a calcium-dependent and isoform-specific manner. Modulates KCND3/Kv4.3 currents. Isoform 4 does not increase KCND2 expression at the cell membrane. Isoform 4 retains KCND3 in the endoplasmic reticulum and negatively regulates its expression at the cell membrane. The polypeptide is Kv channel-interacting protein 4 (KCNIP4) (Macaca fascicularis (Crab-eating macaque)).